Reading from the N-terminus, the 155-residue chain is Trypsin/factor XIIA inhibitor (155 aa).

Positions 1–28 are cleaved as a signal peptide; sequence MASSSSSSHRRLILAAAVLLSVLAAASA. Disulfide bonds link cysteine 34–cysteine 83, cysteine 48–cysteine 72, cysteine 57–cysteine 114, cysteine 73–cysteine 132, and cysteine 85–cysteine 143. The active site involves arginine 62. Positions 139–155 are cleaved as a propeptide — C-terminal peptide; sequence GVAECPWILGGGTMPSK.

Belongs to the protease inhibitor I6 (cereal trypsin/alpha-amylase inhibitor) family. Monomer.

It is found in the secreted. Functionally, potent inhibitor of mammalian trypsin and a specific inhibitor of factor XIIa (activated hageman factor). The polypeptide is Trypsin/factor XIIA inhibitor (Zea mays (Maize)).